The chain runs to 418 residues: AP-3 complex subunit mu-1 (418 aa).

The 242-residue stretch at 176-417 (NNEAYFDVVE…VTKAGKFQVR (242 aa)) folds into the MHD domain.

The protein belongs to the adaptor complexes medium subunit family. As to quaternary structure, adaptor protein complex 3 (AP-3) is a heterotetramer composed of two large adaptins (delta-type subunit AP3D1 and beta-type subunit AP3B1 or AP3B2), a medium adaptin (mu-type subunit AP3M1 or AP3M2) and a small adaptin (sigma-type subunit APS1 or AP3S2). Interacts with AGAP1. AP-3 associates with the BLOC-1 complex.

The protein localises to the golgi apparatus. It localises to the cytoplasmic vesicle membrane. In terms of biological role, part of the AP-3 complex, an adaptor-related complex which is not clathrin-associated. The complex is associated with the Golgi region as well as more peripheral structures. It facilitates the budding of vesicles from the Golgi membrane and may be directly involved in trafficking to lysosomes. In concert with the BLOC-1 complex, AP-3 is required to target cargos into vesicles assembled at cell bodies for delivery into neurites and nerve terminals. This Bos taurus (Bovine) protein is AP-3 complex subunit mu-1 (AP3M1).